Consider the following 402-residue polypeptide: Zinc finger CCHC domain-containing protein 12 (402 aa).

The segment covering 268 to 277 (DTPDDSDEDV) has biased composition (acidic residues). The tract at residues 268–342 (DTPDDSDEDV…PGNMRRTRKR (75 aa)) is disordered. Residues 311–323 (SPNNSQFPSPCTS) show a composition bias toward polar residues. Residues 346 to 363 (IRCSYCGEEGHSKETCDN) form a CCHC-type zinc finger. Over residues 383–392 (HTEERSREAP) the composition is skewed to basic and acidic residues. Positions 383–402 (HTEERSREAPVEPSDPCELQ) are disordered.

The protein belongs to the ZCCHC12 family. Interacts with SMAD1 and CREB-binding protein (CBP). Forms a protein-DNA complex through its association with SMAD1.

Transcriptional coactivator in the bone morphogenetic protein (BMP)-signaling pathway. It positively modulates BMP signaling by interacting with SMAD1 and associating with CBP in the transcription complex. It contributes to the BMP-induced enhancement of cholinergic-neuron-specific gene expression. The chain is Zinc finger CCHC domain-containing protein 12 (ZCCHC12) from Bos taurus (Bovine).